Consider the following 450-residue polypeptide: MMNTSSHLKAQASCPLVEHFLRRKLSKENFDRFIPNRSAMDFDFANYALTQGRKRNVDEVTSASRKAYMTQLAEAMNQNRTRILAFRNKPKALLSSNHSDPPHQQPISVKPRRYIPQNSERVLDAPGIADDFYLNLLDWGSSNVLAIALGDTVYLWDASSGSTYKLVTIDEEEGPVTSINWTQDGLDLAIGLDNSEVQLWDCVSNRQVRTLRGGHESRVGSLAWNNHILTTGGMDGKIVNNDVRIRSSIVETYLGHTEEVCGLKWSESGKKLASGGNDNVVHIWDHRSVASSNPTRQWLHRFEEHTAAVRALAWCPFQASLLATGGGVGDGKIKFWNTHTGACLNSVETGSQVCSLLWSKSERELLSSHGFTQNQLTLWKYPSMVKMAELNGHTSRVLFMAQSPDGCTVASAAGDETLRLWNVFGEPPKTTKKAASKKYTDPFAHVNHIR.

WD repeat units follow at residues 129–166 (ADDF…TYKL), 171–210 (EEEG…QVRT), 214–251 (GHES…SIVE), 255–294 (GHTE…SSNP), 304–346 (EHTA…CLNS), 348–389 (ETGS…KMAE), and 392–431 (GHTS…PKTT).

The protein belongs to the WD repeat CDC20/Fizzy family. As to quaternary structure, the APC/C is composed of at least 11 subunits that stay tightly associated throughout the cell cycle. Binds to GIG1 and PYM. Part of the mitotic checkpoint complex (MCC); interacts with MAD2 and BUB1.

It is found in the nucleus. The protein operates within protein modification; protein ubiquitination. In terms of biological role, component of the anaphase promoting complex/cyclosome (APC/C), a cell cycle-regulated E3 ubiquitin-protein ligase complex that controls progression through mitosis and the G1 phase of the cell cycle. The chain is Cell division cycle 20.5, cofactor of APC complex (CDC20-5) from Arabidopsis thaliana (Mouse-ear cress).